A 653-amino-acid chain; its full sequence is 4-hydroxy-2,2'-bipyrrole-5-methanol synthase PigH (653 aa).

Residues 7–84 (ETYETLKQSV…DALDGILQRE (78 aa)) enclose the Carrier domain. O-(pantetheine 4'-phosphoryl)serine is present on Ser-45. 354–355 (GY) is a binding site for pyridoxal 5'-phosphate. A substrate-binding site is contributed by His-379. Residues Ser-426, His-454, and Thr-482 each contribute to the pyridoxal 5'-phosphate site. Lys-485 bears the N6-(pyridoxal phosphate)lysine mark. The chain crosses the membrane as a helical span at residues 512–532 (VFAATIPAPVAAGVIASIDVM).

Pyridoxal 5'-phosphate is required as a cofactor.

The protein resides in the membrane. The protein operates within antibiotic biosynthesis; prodigiosin biosynthesis. In terms of biological role, involved in the biosynthesis of 4-methoxy-2,2'-bipyrrole-5-carbaldehyde (MBC), one of the terminal products involved in the biosynthesis of the red antibiotic prodigiosin (Pig). Carrier of the L-malonyl group (malonyl-S-PigH), which is decarboxylated by PigJ to yield a C2 carbanion acetyl-S-PigH. Then the pyrrolyl group of pyrrolyl-S-cysteinyl PigJ intermediate is captured by the C2 carbanion acetyl-S-PigH to yield the pyrrolyl-beta-ketoacyl-S-PigH. In the last step, PigH catalyzes the decarboxylative condensation between the pyrrolyl-beta-ketoacyl (pyrrolyl-beta-ketoacyl-S-PigH) and L-serine to yield 4-hydroxy-2,2'-bipyrrole-5-methanol (HBM). This is 4-hydroxy-2,2'-bipyrrole-5-methanol synthase PigH from Serratia sp. (strain ATCC 39006) (Prodigiosinella confusarubida).